Consider the following 144-residue polypeptide: 3-hydroxyacyl-[acyl-carrier-protein] dehydratase FabZ (144 aa).

Histidine 47 is an active-site residue.

This sequence belongs to the thioester dehydratase family. FabZ subfamily.

Its subcellular location is the cytoplasm. The catalysed reaction is a (3R)-hydroxyacyl-[ACP] = a (2E)-enoyl-[ACP] + H2O. In terms of biological role, involved in unsaturated fatty acids biosynthesis. Catalyzes the dehydration of short chain beta-hydroxyacyl-ACPs and long chain saturated and unsaturated beta-hydroxyacyl-ACPs. The chain is 3-hydroxyacyl-[acyl-carrier-protein] dehydratase FabZ from Dechloromonas aromatica (strain RCB).